The following is a 345-amino-acid chain: Leucine-rich repeat-containing protein 69 (345 aa).

LRR repeat units lie at residues 13–34 (KAKTLNLNGKRLQRVPVAVGCL), 36–58 (SLTELQLKNNLLCRLPVELSALC), 59–80 (RLRVLHLGNNHFEKVPEEIKYL), 82–103 (CLERLHLFGNRISEIPAAALDG), 106–127 (NLLFLNLNNNLLEHLPREIYKL), 129–151 (SLETLSINNNHMKAIPKELCFLQ), 152–173 (NLQELHLANNQLDSLPDELSYL), 175–196 (NLKELRLSRNQLTGLPEGICKL), 198–219 (KLKILDVAGNFIRSFPSAMHRV), and 220–241 (PLTELYCEENPLLEKQPVFARQ).

The protein belongs to the LRRC69 family.

This chain is Leucine-rich repeat-containing protein 69 (lrrc69), found in Xenopus laevis (African clawed frog).